The following is a 593-amino-acid chain: MGSRGLPPLLLVLLNCYTSSSTQVIAIPAAATPAVTKEDLNSTKATPTTLQPSLSPRTPGTPRAPERSGPRPTPVTDVAALCVCDLLPAQCDVNCCCDPDCSPADFSIFSACSVPVVTGDRQFCSQKAAFYSMNLTADPPHRDFKLIDQINPSVFCIHISNYKPALSFANPEVPDENNFDRLMQTSGGFTLSAESAVPSTAASDGPQPTKYEYGAPLQTAGASSGSFLKLPSPLTSSLCADQNPAAFLVSQAFECSRRVDIEQCEGMEALSMAHYSSPAILRVPNSMTQVSIKIQSVMYRSLNHTLTQLEGHGVLRPSLVSTGQDRLCSNVVLQVKYSLLYTATGQIHEAGLSLVLGTLSSAVSLLQQKFEIHFIQHGTKPVPLSGNPGYRVGLPLAAGFQPQKGSGIIQTTNRQGQFTILRSTSQQDCLASEGLRTPVLFGYNVQSGCQLRLTGTIPCGLLAQKVQDLLRGQAFPDYVAAFGNSRAQDVQDWVPVHFVTYSSNMKGSCQLPVALAIEVKWTKYGSLLNPQARIVNVTAQLVSVPEPLPGPERTVVISTAVTFVDVSAPAEAGFRAPPTINARLPFSFFFPFV.

The N-terminal stretch at 1-22 (MGSRGLPPLLLVLLNCYTSSST) is a signal peptide. Residues 37-72 (KEDLNSTKATPTTLQPSLSPRTPGTPRAPERSGPRP) form a disordered region. The N-linked (GlcNAc...) asparagine glycan is linked to Asn-41. Positions 42–58 (STKATPTTLQPSLSPRT) are enriched in polar residues. N-linked (GlcNAc...) asparagine glycosylation occurs at Asn-303. Residue Arg-486 is modified to Omega-N-methylarginine. A glycan (N-linked (GlcNAc...) asparagine) is linked at Asn-536.

It belongs to the tectonic family. In terms of assembly, part of the tectonic-like complex (also named B9 complex).

It is found in the cytoplasm. The protein resides in the cytoskeleton. Its subcellular location is the cilium basal body. It localises to the secreted. Component of the tectonic-like complex, a complex localized at the transition zone of primary cilia and acting as a barrier that prevents diffusion of transmembrane proteins between the cilia and plasma membranes. Regulator of Hedgehog (Hh), required for both activation and inhibition of the Hh pathway in the patterning of the neural tube. During neural tube development, it is required for formation of the most ventral cell types and for full Hh pathway activation. Functions in Hh signal transduction to fully activate the pathway in the presence of high Hh levels and to repress the pathway in the absence of Hh signals. Modulates Hh signal transduction downstream of SMO and RAB23. In Mus musculus (Mouse), this protein is Tectonic-1 (Tctn1).